The sequence spans 254 residues: uncharacterized protein (254 aa).

Cys71 functions as the Acyl-thioester intermediate in the catalytic mechanism. Catalysis depends on residues His110 and Asp125.

Belongs to the arylamine N-acetyltransferase family.

This is an uncharacterized protein from Bacillus subtilis (strain 168).